Consider the following 314-residue polypeptide: Deacetoxycephalosporin C synthase (314 aa).

The 114-residue stretch at 156–269 (DCEPLLRLRY…RTSSVFFLRP (114 aa)) folds into the Fe2OG dioxygenase domain.

This sequence belongs to the iron/ascorbate-dependent oxidoreductase family. It depends on Fe cation as a cofactor. Requires L-ascorbate as cofactor.

The catalysed reaction is penicillin N + 2-oxoglutarate + O2 = deacetoxycephalosporin C + succinate + CO2 + H2O. The protein operates within antibiotic biosynthesis; cephalosporin C biosynthesis. Catalyzes the step from penicillin N to deacetoxy-cephalosporin C. The polypeptide is Deacetoxycephalosporin C synthase (cefE) (Amycolatopsis lactamdurans (Nocardia lactamdurans)).